The following is a 215-amino-acid chain: Peptide methionine sulfoxide reductase MsrA (215 aa).

Residue Cys58 is part of the active site.

This sequence belongs to the MsrA Met sulfoxide reductase family.

It carries out the reaction L-methionyl-[protein] + [thioredoxin]-disulfide + H2O = L-methionyl-(S)-S-oxide-[protein] + [thioredoxin]-dithiol. The catalysed reaction is [thioredoxin]-disulfide + L-methionine + H2O = L-methionine (S)-S-oxide + [thioredoxin]-dithiol. Functionally, has an important function as a repair enzyme for proteins that have been inactivated by oxidation. Catalyzes the reversible oxidation-reduction of methionine sulfoxide in proteins to methionine. This Pseudomonas aeruginosa (strain UCBPP-PA14) protein is Peptide methionine sulfoxide reductase MsrA.